The following is a 706-amino-acid chain: MAGIRVTKVDWQRSRNGAAHHTQEYPCPELVVRRGQSFSLTLELSRALDCEEILIFTMETGPRASEALHTKAVFQTSELERGEGWTAAREAQMEKTLTVSLASPPSAVIGRYLLSIRLSSHRKHSNRRLGEFVLLFNPWCAEDDVFLASEEERQEYVLSDSGIIFRGVEKHIRAQGWNYGQFEEDILNICLSILDRSPGHQNNPATDVSCRHNPIYVTRVISAMVNSNNDRGVVQGQWQGKYGGGTSPLHWRGSVAILQKWLKGRYKPVKYGQCWVFAGVLCTVLRCLGIATRVVSNFNSAHDTDQNLSVDKYVDSFGRTLEDLTEDSMWNFHVWNESWFARQDLGPSYNGWQVLDATPQEESEGVFRCGPASVTAIREGDVHLAHDGPFVFAEVNADYITWLWHEDESRERVYSNTKKIGRCISTKAVGSDSRVDITDLYKYPEGSRKERQVYSKAVNRLFGVEASGRRIWIRRAGGRCLWRDDLLEPATKPSIAGKFKVLEPPMLGHDLRLALCLANLTSRAQRVRVNLSGATILYTRKPVAEILHESHAVRLGPQEEKRIPITISYSKYKEDLTEDKKILLAAMCLVTKGEKLLVEKDITLEDFITIKVLGPAMVGVAVTVEVTVVNPLIERVKDCALMVEGSGLLQEQLSIDVPTLEPQERASVQFDITPSKSGPRQLQVDLVSPHFPDIKGFVIVHVATAK.

Alanine 223, asparagine 226, and asparagine 228 together coordinate Ca(2+). Cysteine 274 is a catalytic residue. Aspartate 303, aspartate 305, asparagine 307, serine 309, and aspartate 327 together coordinate Ca(2+). Residues histidine 333 and aspartate 356 contribute to the active site. Residues asparagine 396, threonine 417, glutamate 445, and glutamate 450 each contribute to the Ca(2+) site.

The protein belongs to the transglutaminase superfamily. Transglutaminase family. Requires Ca(2+) as cofactor.

It localises to the cytoplasm. The catalysed reaction is L-glutaminyl-[protein] + L-lysyl-[protein] = [protein]-L-lysyl-N(6)-5-L-glutamyl-[protein] + NH4(+). Functionally, catalyzes the cross-linking of proteins and the conjugation of polyamines to proteins. The chain is Protein-glutamine gamma-glutamyltransferase 6 (TGM6) from Homo sapiens (Human).